Reading from the N-terminus, the 356-residue chain is Glutamine synthetase root isozyme 3 (356 aa).

The GS beta-grasp domain maps to isoleucine 19–glycine 99. The region spanning lysine 106–proline 356 is the GS catalytic domain.

Belongs to the glutamine synthetase family. In terms of assembly, homooctamer. Found in all the tissues examined with higher expression found in tissues of the root.

The protein localises to the cytoplasm. The enzyme catalyses L-glutamate + NH4(+) + ATP = L-glutamine + ADP + phosphate + H(+). Plays a role in the flow of nitrogen into nitrogenous organic compounds. This chain is Glutamine synthetase root isozyme 3 (GLN4), found in Zea mays (Maize).